A 307-amino-acid chain; its full sequence is Ornithine carbamoyltransferase (307 aa).

Residues 56 to 59 (STRT), Q83, R107, and 134 to 137 (HPCQ) each bind carbamoyl phosphate. L-ornithine is bound by residues N165, D223, and 227-228 (SM). Residues 263-264 (CL) and R291 contribute to the carbamoyl phosphate site.

The protein belongs to the aspartate/ornithine carbamoyltransferase superfamily. OTCase family.

The protein resides in the cytoplasm. It carries out the reaction carbamoyl phosphate + L-ornithine = L-citrulline + phosphate + H(+). The protein operates within amino-acid biosynthesis; L-arginine biosynthesis; L-arginine from L-ornithine and carbamoyl phosphate: step 1/3. Its function is as follows. Reversibly catalyzes the transfer of the carbamoyl group from carbamoyl phosphate (CP) to the N(epsilon) atom of ornithine (ORN) to produce L-citrulline. The polypeptide is Ornithine carbamoyltransferase (Cupriavidus pinatubonensis (strain JMP 134 / LMG 1197) (Cupriavidus necator (strain JMP 134))).